The following is a 5596-amino-acid chain: Midasin (5596 aa).

Met1 carries the post-translational modification N-acetylmethionine. 4 AAA-ATPase protomer regions span residues 307–591 (SVCK…TSKL), 659–978 (LIEQ…ASNP), 1048–1316 (KEPT…QEEI), and 1362–1616 (HIVW…NKMG). Residue 329–336 (GPIGCGKT) coordinates ATP. The interval 517–537 (SSVGCEQAPEEVSEARRENKR) is disordered. ATP is bound by residues 677-684 (GETGTGKT) and 1084-1091 (GETSVGKT). Thr1177 carries the phosphothreonine modification. Residue 1390–1397 (GDTGCGKT) participates in ATP binding. Lys1683 is subject to N6-acetyllysine. AAA-ATPase protomer regions lie at residues 1738-1995 (RLLR…AVFK) and 2053-2313 (MKCV…IYIS). ATP-binding positions include 1753 to 1760 (GSPGVGKT) and 2066 to 2073 (GPASVGKT). The residue at position 1754 (Ser1754) is a Phosphoserine. The tract at residues 2418 to 4691 (SLRAHETWGD…EGEGMKDVSD (2274 aa)) is linker. The disordered stretch occupies residues 3989–4008 (LVESDKEEQPDFLPRPTDGA). Phosphothreonine is present on Thr4212. At Ser4538 the chain carries Phosphoserine. 2 disordered regions span residues 4669–4688 (ATEF…GMKD) and 4700–5260 (EDTF…SRES). The segment covering 4702 to 4724 (TFQKGQEKDKEDPDSKSDIKGED) has biased composition (basic and acidic residues). The span at 4741–4757 (ELEEQEEDDEKSDSEGG) shows a compositional bias: acidic residues. 2 positions are modified to phosphoserine: Ser4752 and Ser4754. The segment covering 4758-4780 (DLDKHMGDLNGEEADKLDERLWG) has biased composition (basic and acidic residues). Acidic residues predominate over residues 4781-4794 (DDDEEEDEEEEDNK). Residues 4822–4834 (NKDKSQQDKKEEK) are compositionally biased toward basic and acidic residues. Residues 4835 to 4844 (EEAEADDGGQ) are compositionally biased toward acidic residues. Residues 4845 to 4855 (GEDKINEQIDE) show a composition bias toward basic and acidic residues. The segment covering 4877-4888 (EALDLPDDLNLD) has biased composition (acidic residues). Ser4889 carries the phosphoserine modification. Residues 4896 to 4908 (EDTDNEEGEEENP) are compositionally biased toward acidic residues. Thr4898 carries the post-translational modification Phosphothreonine. A compositionally biased stretch (basic and acidic residues) spans 4909 to 4928 (LEIKEKPEEAGHEAEERGET). Phosphoserine is present on residues Ser4937 and Ser4946. The segment covering 4940–4966 (EPEEGPSEDDKAEGEEEMDTGADDQDG) has biased composition (acidic residues). The segment covering 4968-4989 (AAQHPEEHSEEQQQSVEEKDKE) has biased composition (basic and acidic residues). A compositionally biased stretch (acidic residues) spans 5007 to 5021 (QEEEEREDSDTEEQV). Ser5015 bears the Phosphoserine mark. Residues 5033 to 5046 (CGQTGVENMQNTQA) are compositionally biased toward polar residues. A compositionally biased stretch (basic and acidic residues) spans 5054 to 5064 (PEKEQGKEEHG). Residues 5088 to 5101 (KHTRKNTQSFKRKP) show a composition bias toward basic residues. Residues 5105 to 5115 (DNERSMGDHNE) show a composition bias toward basic and acidic residues. Residues 5132–5141 (QGPAQQPQAQ) are compositionally biased toward low complexity. Positions 5181-5197 (QEEEEIEDTLMDTEEQE) are enriched in acidic residues. Composition is skewed to basic and acidic residues over residues 5198 to 5213 (EFKA…EEIK) and 5233 to 5260 (KTEE…SRES). The 200-residue stretch at 5384–5583 (QICLAIDDSS…ALPETLSDAL (200 aa)) folds into the VWFA domain.

Belongs to the midasin family. Associates with pre-60S ribosomes in the nucleoplasm. Interacts (via its hexameric AAA ATPase ring) with the PELP1 complex (via PELP1); the interaction is regulated by SUMO conjugation of PELP1 and is crucial for recruitment of MDN1 to the pre-ribosomal particle. Interacts (via VWFA/MIDAS domain) with WDR12 (via UBL domain). Interacts (via VWFA/MIDAS domain) with NLE1 (via UBL domain).

The protein resides in the nucleus. Its subcellular location is the nucleolus. It is found in the nucleoplasm. The protein localises to the cytoplasm. Functionally, nuclear chaperone required for maturation and nuclear export of pre-60S ribosome subunits. Functions at successive maturation steps to remove ribosomal factors at critical transition points, first driving the exit of early pre-60S particles from the nucleolus and then driving late pre-60S particles from the nucleus. At an early stage in 60S maturation, mediates the dissociation of the PeBoW complex (PES1-BOP1-WDR12) from early pre-60S particles, rendering them competent for export from the nucleolus to the nucleoplasm. Subsequently recruited to the nucleoplasmic particles through interaction with SUMO-conjugated PELP1 complex. This binding is only possible if the 5S RNP at the central protuberance has undergone the rotation to complete its maturation. The protein is Midasin (MDN1) of Homo sapiens (Human).